A 610-amino-acid polypeptide reads, in one-letter code: UvrABC system protein C (610 aa).

One can recognise a GIY-YIG domain in the interval 16 to 94 (SQPGVYRMYD…IKLYQPRYNV (79 aa)). In terms of domain architecture, UVR spans 204 to 239 (DQVLTQLIARMEKASQDLAFEEAARIRDQIQAVRRV).

The protein belongs to the UvrC family. As to quaternary structure, interacts with UvrB in an incision complex.

Its subcellular location is the cytoplasm. In terms of biological role, the UvrABC repair system catalyzes the recognition and processing of DNA lesions. UvrC both incises the 5' and 3' sides of the lesion. The N-terminal half is responsible for the 3' incision and the C-terminal half is responsible for the 5' incision. This Salmonella paratyphi B (strain ATCC BAA-1250 / SPB7) protein is UvrABC system protein C.